We begin with the raw amino-acid sequence, 125 residues long: Fluoride-specific ion channel FluC (125 aa).

Helical transmembrane passes span 9–29 (LFCA…YGLL), 32–52 (AFPY…GLIM), 67–87 (IGLT…SYET), and 99–119 (AFTN…LGII). Residues Gly-75 and Thr-78 each contribute to the Na(+) site.

Belongs to the fluoride channel Fluc/FEX (TC 1.A.43) family.

Its subcellular location is the cell inner membrane. It carries out the reaction fluoride(in) = fluoride(out). Its activity is regulated as follows. Na(+) is not transported, but it plays an essential structural role and its presence is essential for fluoride channel function. Functionally, fluoride-specific ion channel. Important for reducing fluoride concentration in the cell, thus reducing its toxicity. In Trichlorobacter lovleyi (strain ATCC BAA-1151 / DSM 17278 / SZ) (Geobacter lovleyi), this protein is Fluoride-specific ion channel FluC.